Reading from the N-terminus, the 83-residue chain is Cell division topological specificity factor (83 aa).

It belongs to the MinE family.

Prevents the cell division inhibition by proteins MinC and MinD at internal division sites while permitting inhibition at polar sites. This ensures cell division at the proper site by restricting the formation of a division septum at the midpoint of the long axis of the cell. The protein is Cell division topological specificity factor of Pseudoalteromonas atlantica (strain T6c / ATCC BAA-1087).